The chain runs to 277 residues: Phosphatidylserine decarboxylase proenzyme (277 aa).

Residues Asp-88, His-144, and Ser-242 each act as charge relay system; for autoendoproteolytic cleavage activity in the active site. The Schiff-base intermediate with substrate; via pyruvic acid; for decarboxylase activity role is filled by Ser-242. Residue Ser-242 is modified to Pyruvic acid (Ser); by autocatalysis.

The protein belongs to the phosphatidylserine decarboxylase family. PSD-B subfamily. Prokaryotic type I sub-subfamily. Heterodimer of a large membrane-associated beta subunit and a small pyruvoyl-containing alpha subunit. Pyruvate is required as a cofactor. Post-translationally, is synthesized initially as an inactive proenzyme. Formation of the active enzyme involves a self-maturation process in which the active site pyruvoyl group is generated from an internal serine residue via an autocatalytic post-translational modification. Two non-identical subunits are generated from the proenzyme in this reaction, and the pyruvate is formed at the N-terminus of the alpha chain, which is derived from the carboxyl end of the proenzyme. The autoendoproteolytic cleavage occurs by a canonical serine protease mechanism, in which the side chain hydroxyl group of the serine supplies its oxygen atom to form the C-terminus of the beta chain, while the remainder of the serine residue undergoes an oxidative deamination to produce ammonia and the pyruvoyl prosthetic group on the alpha chain. During this reaction, the Ser that is part of the protease active site of the proenzyme becomes the pyruvoyl prosthetic group, which constitutes an essential element of the active site of the mature decarboxylase.

It is found in the cell membrane. The catalysed reaction is a 1,2-diacyl-sn-glycero-3-phospho-L-serine + H(+) = a 1,2-diacyl-sn-glycero-3-phosphoethanolamine + CO2. The protein operates within phospholipid metabolism; phosphatidylethanolamine biosynthesis; phosphatidylethanolamine from CDP-diacylglycerol: step 2/2. Its function is as follows. Catalyzes the formation of phosphatidylethanolamine (PtdEtn) from phosphatidylserine (PtdSer). The protein is Phosphatidylserine decarboxylase proenzyme of Psychrobacter cryohalolentis (strain ATCC BAA-1226 / DSM 17306 / VKM B-2378 / K5).